The primary structure comprises 122 residues: Large ribosomal subunit protein uL14 (122 aa).

Belongs to the universal ribosomal protein uL14 family. In terms of assembly, part of the 50S ribosomal subunit. Forms a cluster with proteins L3 and L19. In the 70S ribosome, L14 and L19 interact and together make contacts with the 16S rRNA in bridges B5 and B8.

Its function is as follows. Binds to 23S rRNA. Forms part of two intersubunit bridges in the 70S ribosome. This Agrobacterium fabrum (strain C58 / ATCC 33970) (Agrobacterium tumefaciens (strain C58)) protein is Large ribosomal subunit protein uL14.